The chain runs to 143 residues: Large ribosomal subunit protein uL13 (143 aa).

The protein belongs to the universal ribosomal protein uL13 family. In terms of assembly, part of the 50S ribosomal subunit.

In terms of biological role, this protein is one of the early assembly proteins of the 50S ribosomal subunit, although it is not seen to bind rRNA by itself. It is important during the early stages of 50S assembly. The polypeptide is Large ribosomal subunit protein uL13 (Desulfitobacterium hafniense (strain Y51)).